Consider the following 365-residue polypeptide: Chorismate synthase (365 aa).

Residues R48 and R54 each coordinate NADP(+). FMN-binding positions include 131–133, 243–244, G288, 303–307, and R329; these read RSS, NA, and KPTSS.

This sequence belongs to the chorismate synthase family. As to quaternary structure, homotetramer. The cofactor is FMNH2.

The enzyme catalyses 5-O-(1-carboxyvinyl)-3-phosphoshikimate = chorismate + phosphate. It functions in the pathway metabolic intermediate biosynthesis; chorismate biosynthesis; chorismate from D-erythrose 4-phosphate and phosphoenolpyruvate: step 7/7. Its function is as follows. Catalyzes the anti-1,4-elimination of the C-3 phosphate and the C-6 proR hydrogen from 5-enolpyruvylshikimate-3-phosphate (EPSP) to yield chorismate, which is the branch point compound that serves as the starting substrate for the three terminal pathways of aromatic amino acid biosynthesis. This reaction introduces a second double bond into the aromatic ring system. In Agrobacterium fabrum (strain C58 / ATCC 33970) (Agrobacterium tumefaciens (strain C58)), this protein is Chorismate synthase.